The following is a 101-amino-acid chain: Integration host factor subunit beta (101 aa).

Residues 57–101 (PARAGRNPRTGAHVPVDQKSVPFFKTGKEMRERLNRDHPDPGAAD) form a disordered region. Residues 82–101 (TGKEMRERLNRDHPDPGAAD) are compositionally biased toward basic and acidic residues.

This sequence belongs to the bacterial histone-like protein family. In terms of assembly, heterodimer of an alpha and a beta chain.

Its function is as follows. This protein is one of the two subunits of integration host factor, a specific DNA-binding protein that functions in genetic recombination as well as in transcriptional and translational control. The polypeptide is Integration host factor subunit beta (Bradyrhizobium diazoefficiens (strain JCM 10833 / BCRC 13528 / IAM 13628 / NBRC 14792 / USDA 110)).